We begin with the raw amino-acid sequence, 541 residues long: Nectin 1b (541 aa).

A signal peptide spans 1–21 (MDKQESFFVGHKSHRCSQNRS). The Extracellular portion of the chain corresponds to 22 to 396 (VSQIHQRTSR…PAELHSSGAA (375 aa)). N-linked (GlcNAc...) asparagine glycans are attached at residues Asn-51, Asn-105, Asn-180, Asn-242, Asn-326, Asn-337, and Asn-372. Residues 77-182 (GDTVELKCLF…GNRENMVNLT (106 aa)) form the Ig-like V-type domain. A disulfide bond links Cys-84 and Cys-165. 2 consecutive Ig-like C2-type domains span residues 187 to 282 (PVTK…VILN) and 287 to 374 (PEVK…VNVT). Intrachain disulfides connect Cys-212–Cys-266 and Cys-309–Cys-356. Residues 397–417 (IGGAVGGVALLVAAIALLVFF) form a helical membrane-spanning segment. The Cytoplasmic portion of the chain corresponds to 418–541 (LRRRQRTFKG…SVISKKEWYV (124 aa)). Residues 440–507 (YSKAGGMPAH…VDEGESRDYD (68 aa)) form a disordered region. Residues 479–493 (SGDRDFDGNSEDLKR) are compositionally biased toward basic and acidic residues.

The protein belongs to the nectin family. Cis- and trans-homodimer. Can form trans-heterodimers. In terms of tissue distribution, expressed in the developing eye and nervous system.

The protein localises to the cell membrane. It is found in the cell junction. It localises to the adherens junction. Cell adhesion molecule that promotes cell-cell contacts and plays important roles in the development of the nervous system. Acts by forming homophilic or heterophilic trans-dimers. The polypeptide is Nectin 1b (Danio rerio (Zebrafish)).